Reading from the N-terminus, the 525-residue chain is MATLLRSLALFKRNKDKPPITSGSGGAIRGIKHIIIVPIPGDSSITTRSRLLDRLVRLIGNPDVSGPKLTGALIGILSLFVESPGQLIQRITDDPDVSIRLLEVVQSDQSQSGLTFASRGTNMEDEADQYFSHDDPISSDQSRFGWFENKEISDIEVQDPEGFNMILGTILAQIWVLLAKAVTAPDTAADSELRRWIKYTQQRRVVGEFRLERKWLDVVRNRIAEDLSLRRFMVALILDIKRTPGNKPRIAEMICDIDTYIVEAGLASFILTIKFGIETMYPALGLHEFAGELSTLESLMNLYQQMGETAPYMVILENSIQNKFSAGSYPLLWSYAMGVGVELENSMGGLNFGRSYFDPAYFRLGQEMVRRSAGKVSSTLASELGITAEDARLVSEIAMHTTEDKISRAVGPRQAQVSFLHGDQSENELPRLGGKEDRRVKQSRGEARESYRETGPSRASDARAAHLPTGTPLDIDTASESSQDPQDSRRSADALLRLQAMAGISEEQGSDTDTPIVYNDRNLLD.

The interval 1–36 is homomultimerization; sequence MATLLRSLALFKRNKDKPPITSGSGGAIRGIKHIII. The segment at 1 to 375 is RNA packaging and organization of the helical nucleocapsid; that stretch reads MATLLRSLAL…QEMVRRSAGK (375 aa). The interval 1-403 is ncore; sequence MATLLRSLAL…VSEIAMHTTE (403 aa). A Nuclear localization signal motif is present at residues 70–77; the sequence is TGALIGIL. RNA-binding residues include Lys-180, Arg-195, Gln-202, and Tyr-260. Phosphothreonine; by host is present on Thr-279. An RNA-binding site is contributed by Asn-351. Residues 373–391 form a homomultimerization region; the sequence is AGKVSSTLASELGITAEDA. Residues 404-525 are ntail; sequence DKISRAVGPR…IVYNDRNLLD (122 aa). Positions 418 to 525 are disordered; that stretch reads SFLHGDQSEN…IVYNDRNLLD (108 aa). The Nuclear export signal signature appears at 425–440; it reads SENELPRLGGKEDRRV. A compositionally biased stretch (basic and acidic residues) spans 433-452; it reads GGKEDRRVKQSRGEARESYR. The segment at 477–505 is interaction with the phosphoprotein; sequence TASESSQDPQDSRRSADALLRLQAMAGIS.

Belongs to the paramyxoviruses nucleocapsid family. In terms of assembly, homomultimer; forms the nucleocapsid. Binds to viral genomic RNA. N0 interacts (via Ncore) with the phosphoprotein (via N-terminus); this interaction allows P to chaperon N0 to avoid N polymerization and non-specific RNA binding before encapsidation. Interacts (via the Ntail) as N-RNA template with the phosphoprotein (via C-terminus XD); this interaction maintains the P/L complex anchored to the nucleocapsid template during the sequential transcription. Interacts with the phosphoprotein; this interaction leads to the formation of membraneless organelles that function as viral replication factories. Interacts (via Ncore) with human FCGR2B protein. Interacts (via Ntail) with a protein on human thymic epithelial cells, termed Nucleoprotein Receptor (NR); this interaction induces growth arrest. Interacts with human PPIA/CYPA and PPIB/CYPB. Phosphorylation at Thr-279 is required for the formation of the nucleocapsid.

It localises to the virion. It is found in the host cytoplasm. The protein resides in the host nucleus. Its function is as follows. Forms the helical nucleocapsid (NC) in a ratio of 1 N per 6 ribonucleotides, protecting the genome from nucleases. The nucleocapsid (NC) has a helical structure with either 12.35 or 11.64 N per turn, approximately 20 nm in diameter, with a hollow central cavity approximately 5 nm in diameter. The encapsidated genomic RNA serves as template for transcription and replication; encapsidation by N is coupled to RNA synthesis. Forms the encapsidation complex with the phosphoprotein protein P. Before encapsidation, the newly synthesized free N protein, so-called N0, is chaperoned by P. Participates, together with P, in the formation of viral factories (viroplasms), which are large inclusions in the host cytoplasm where replication takes place. N is released in the blood following lysis of measles infected cells, it interacts then with human FCGR2B on immune cells, inducing apoptosis and blocking inflammatory immune response. This chain is Nucleoprotein (N), found in Homo sapiens (Human).